Here is a 107-residue protein sequence, read N- to C-terminus: Flagellar transcriptional regulator FlhD (107 aa).

Belongs to the FlhD family. As to quaternary structure, homodimer; disulfide-linked. Forms a heterohexamer composed of two FlhC and four FlhD subunits. Each FlhC binds a FlhD dimer, forming a heterotrimer, and a hexamer assembles by dimerization of two heterotrimers.

The protein localises to the cytoplasm. Its function is as follows. Functions in complex with FlhC as a master transcriptional regulator that regulates transcription of several flagellar and non-flagellar operons by binding to their promoter region. Activates expression of class 2 flagellar genes, including fliA, which is a flagellum-specific sigma factor that turns on the class 3 genes. Also regulates genes whose products function in a variety of physiological pathways. The polypeptide is Flagellar transcriptional regulator FlhD (Bordetella bronchiseptica (strain ATCC BAA-588 / NCTC 13252 / RB50) (Alcaligenes bronchisepticus)).